The chain runs to 878 residues: Probable glucan endo-1,3-beta-glucosidase ARB_02077 (878 aa).

Positions 1 to 27 (MARGLVSSLLLGQLLLVLVGLFSPAGA) are cleaved as a signal peptide. N-linked (GlcNAc...) asparagine glycans are attached at residues Asn-228, Asn-257, Asn-290, and Asn-297. The disordered stretch occupies residues 373–472 (AGSGSKAKRL…TACPSAPVTK (100 aa)). Over residues 400-416 (APAPQPPAQSTAPPYPI) the composition is skewed to pro residues. Positions 433–452 (VPTRVPTGGVPSGTTGTAPS) are enriched in low complexity. Asn-505, Asn-659, Asn-795, and Asn-862 each carry an N-linked (GlcNAc...) asparagine glycan.

Belongs to the glycosyl hydrolase 55 family.

The protein resides in the secreted. The enzyme catalyses Hydrolysis of (1-&gt;3)-beta-D-glucosidic linkages in (1-&gt;3)-beta-D-glucans.. Functionally, probable glucan endo-1,3-beta-glucosidase involved in the hydrolysis of fungal cell wall. Classified as a small-oligosaccharide-producing type based its the end products: glucose, laminaribiose or laminaritetraose. The sequence is that of Probable glucan endo-1,3-beta-glucosidase ARB_02077 from Arthroderma benhamiae (strain ATCC MYA-4681 / CBS 112371) (Trichophyton mentagrophytes).